The following is a 382-amino-acid chain: MTEFWLISAPGEKTCQQTWEKLHAATSKNNNLAVTSKFNIPDLKVGTLDVLVGLSDELAKLDAFVEGVVKKVAQYMADVLEDSKDKVQENLLANGVDLVTYITRFQWDMAKYPIKQSLKNISEIIAKGVTQIDNDLKSRASAYNNLKGNLQNLERKNAGSLLTRSLAEIVKKDDFVLDSEYLVTLLVVVPKLNHNDWIKQYETLAEMVVPRSSNVLSEDQDSYLCNVTLFRKAVDDFRHKARENKFIVRDFQYNEEEMKADKEEMNRLSTDKKKQFGPLVRWLKVNFSEAFIAWIHVKALRVFVESVLRYGLPVNFQAMLLQPNKKTLKKLREVLHELYKHLDSSAAAIIDAPMDIPGLNLSQQEYYPYVYYKIDCNLLEFK.

Threonine 2 carries the N-acetylthreonine modification.

Belongs to the V-ATPase C subunit family. As to quaternary structure, V-ATPase is a heteromultimeric enzyme made up of two complexes: the ATP-hydrolytic V1 complex and the proton translocation V0 complex. The V1 complex consists of three catalytic AB heterodimers that form a heterohexamer, three peripheral stalks each consisting of EG heterodimers, one central rotor including subunits D and F, and the regulatory subunits C and H. The proton translocation complex V0 consists of the proton transport subunit a, a ring of proteolipid subunits c9c'', rotary subunit d, subunits e and f, and the accessory subunits ATP6AP1/Ac45 and ATP6AP2/PRR.

It is found in the cytoplasmic vesicle. Its subcellular location is the secretory vesicle. The protein resides in the synaptic vesicle membrane. It localises to the clathrin-coated vesicle membrane. Its function is as follows. Subunit of the V1 complex of vacuolar(H+)-ATPase (V-ATPase), a multisubunit enzyme composed of a peripheral complex (V1) that hydrolyzes ATP and a membrane integral complex (V0) that translocates protons. V-ATPase is responsible for acidifying and maintaining the pH of intracellular compartments and in some cell types, is targeted to the plasma membrane, where it is responsible for acidifying the extracellular environment. Subunit C is necessary for the assembly of the catalytic sector of the enzyme and is likely to have a specific function in its catalytic activity. This Macaca fascicularis (Crab-eating macaque) protein is V-type proton ATPase subunit C 1 (ATP6V1C1).